The chain runs to 98 residues: MKINQPAVAGTLESGDVMIRIAPLDTQDIDLQINSSVEKQFGDAIRTTILDVLAHYNVRGVQLNVDDKGTLDCILRARLEALLARASGIPTLPWEDCQ.

S14 bears the O-(phosphoribosyl dephospho-coenzyme A)serine mark.

It belongs to the CitD family. In terms of assembly, oligomer with a subunit composition of (alpha,beta,gamma)6.

It is found in the cytoplasm. Its function is as follows. Covalent carrier of the coenzyme of citrate lyase. This chain is Citrate lyase acyl carrier protein, found in Shigella boydii serotype 18 (strain CDC 3083-94 / BS512).